Here is a 745-residue protein sequence, read N- to C-terminus: Single-minded homolog 1-A (745 aa).

In terms of domain architecture, bHLH spans 1–53; that stretch reads MKEKSKNAGRTRREKENSEFYELAKLLPLPSAITSQSDKASIIRLTTSYLKMR. 2 consecutive PAS domains span residues 77–147 and 218–288; these read GREL…QPYH and PPSA…LVKG. The Single-minded C-terminal domain maps to 336 to 745; the sequence is EYKGLQLSLD…GTSVIITNGS (410 aa). Over residues 350–364 the composition is skewed to polar residues; that stretch reads TKPSFTYNSPSNPVT. Disordered stretches follow at residues 350–413 and 529–563; these read TKPS…LTDS and EDSA…EPSK. A Nuclear localization signal motif is present at residues 368 to 387; it reads RVGKSRVSRTKTKTRLSPYS. The span at 369–381 shows a compositional bias: basic residues; that stretch reads VGKSRVSRTKTKT. Positions 532–544 are enriched in low complexity; the sequence is AVSSAPDGGSASD.

Efficient DNA binding requires dimerization with another bHLH protein. Heterodimer of sim1a and arnt. In terms of tissue distribution, expressed in embryonic forebrain at the eleven somite stage. Detected in brain throughout embryonic development.

The protein localises to the nucleus. Transcriptional factor that may have pleiotropic effects during embryogenesis and in the adult. The sequence is that of Single-minded homolog 1-A (sim1a) from Danio rerio (Zebrafish).